The sequence spans 810 residues: Actin-regulating kinase PRK1 (810 aa).

The region spanning 22 to 298 (AKIIKYLTSG…CQVLEEVSRL (277 aa)) is the Protein kinase domain. Residues 28-36 (LTSGGFAQV) and K56 contribute to the ATP site. D158 functions as the Proton acceptor in the catalytic mechanism. A phosphoserine mark is found at S402, S428, and S484. 2 disordered regions span residues 552-668 (FTGN…NVNI) and 733-761 (GVLD…HLRT). Residue T553 is modified to Phosphothreonine. The segment covering 553–566 (TGNSVNNSRSASFD) has biased composition (polar residues). S556 is modified (phosphoserine). Residues 567–588 (NNNVNGNGNNTNRRLVSSSTSS) show a composition bias toward low complexity. Composition is skewed to basic and acidic residues over residues 594-612 (SDTK…EKRR) and 622-639 (FDQH…DYYR). Over residues 645–658 (KKTQASAKTTSKPT) the composition is skewed to low complexity. Basic and acidic residues predominate over residues 733–748 (GVLDIKTKSNGKDKSR). The interaction with SH3 domain of ABP1 stretch occupies residues 743–756 (GKDKSRPPRPPPKP).

This sequence belongs to the protein kinase superfamily. Ser/Thr protein kinase family. Interacts with ABP1, which is required for proper actin patch localization.

The protein localises to the cytoplasm. Its subcellular location is the cytoskeleton. It is found in the actin patch. It carries out the reaction L-seryl-[protein] + ATP = O-phospho-L-seryl-[protein] + ADP + H(+). The catalysed reaction is L-threonyl-[protein] + ATP = O-phospho-L-threonyl-[protein] + ADP + H(+). In terms of biological role, protein kinase involved in the regulation of actin cytoskeleton organization and endocytosis. Phosphorylates PAN1 which disrupts the interaction between PAN1 and END3, and between PAN1 and SLA1. Phosphorylates SCD5. Preferentially, phosphorylates substrates on threonine residues in a [L/I/V/M]-x-x-[Q/N/T/S]-x-T-G motif. This Saccharomyces cerevisiae (strain ATCC 204508 / S288c) (Baker's yeast) protein is Actin-regulating kinase PRK1 (PRK1).